The sequence spans 200 residues: 3-isopropylmalate dehydratase small subunit (200 aa).

Belongs to the LeuD family. LeuD type 1 subfamily. Heterodimer of LeuC and LeuD.

It catalyses the reaction (2R,3S)-3-isopropylmalate = (2S)-2-isopropylmalate. It functions in the pathway amino-acid biosynthesis; L-leucine biosynthesis; L-leucine from 3-methyl-2-oxobutanoate: step 2/4. Catalyzes the isomerization between 2-isopropylmalate and 3-isopropylmalate, via the formation of 2-isopropylmaleate. The sequence is that of 3-isopropylmalate dehydratase small subunit from Pectobacterium atrosepticum (strain SCRI 1043 / ATCC BAA-672) (Erwinia carotovora subsp. atroseptica).